The sequence spans 94 residues: MLKLNLQFFSSKKGLGSTKNGRDSESKRLGAKRADGQYVTGGSILFRQRGTKIYPGENVGRGGDDTLFAKIDGVVKFERKGRDKKQVSVYAAAE.

Residues 1 to 9 (MLKLNLQFF) constitute a propeptide that is removed on maturation. The segment at 13–32 (KGLGSTKNGRDSESKRLGAK) is disordered. Basic and acidic residues predominate over residues 20–32 (NGRDSESKRLGAK).

The protein belongs to the bacterial ribosomal protein bL27 family. The N-terminus is cleaved by ribosomal processing cysteine protease Prp.

This Staphylococcus saprophyticus subsp. saprophyticus (strain ATCC 15305 / DSM 20229 / NCIMB 8711 / NCTC 7292 / S-41) protein is Large ribosomal subunit protein bL27.